The chain runs to 157 residues: 2-C-methyl-D-erythritol 2,4-cyclodiphosphate synthase (157 aa).

Residues aspartate 8 and histidine 10 each contribute to the a divalent metal cation site. Residues 8 to 10 (DVH) and 34 to 35 (HS) contribute to the 4-CDP-2-C-methyl-D-erythritol 2-phosphate site. Histidine 42 lines the a divalent metal cation pocket. 4-CDP-2-C-methyl-D-erythritol 2-phosphate contacts are provided by residues 56-58 (DIG), 61-65 (FPDTD), 100-106 (AQAPKMA), 132-135 (TTTE), phenylalanine 139, and arginine 142.

The protein belongs to the IspF family. As to quaternary structure, homotrimer. A divalent metal cation is required as a cofactor.

The catalysed reaction is 4-CDP-2-C-methyl-D-erythritol 2-phosphate = 2-C-methyl-D-erythritol 2,4-cyclic diphosphate + CMP. The protein operates within isoprenoid biosynthesis; isopentenyl diphosphate biosynthesis via DXP pathway; isopentenyl diphosphate from 1-deoxy-D-xylulose 5-phosphate: step 4/6. Involved in the biosynthesis of isopentenyl diphosphate (IPP) and dimethylallyl diphosphate (DMAPP), two major building blocks of isoprenoid compounds. Catalyzes the conversion of 4-diphosphocytidyl-2-C-methyl-D-erythritol 2-phosphate (CDP-ME2P) to 2-C-methyl-D-erythritol 2,4-cyclodiphosphate (ME-CPP) with a corresponding release of cytidine 5-monophosphate (CMP). The chain is 2-C-methyl-D-erythritol 2,4-cyclodiphosphate synthase from Edwardsiella ictaluri (strain 93-146).